A 271-amino-acid chain; its full sequence is Insulin-like growth factor-binding protein 5 (271 aa).

An N-terminal signal peptide occupies residues 1–19 (MVLTAVLLLLAACAGPAQG). One can recognise an IGFBP N-terminal domain in the interval 22–102 (SFVHCEPCDE…LHGRGVCLNE (81 aa)). Disulfide bonds link Cys-26–Cys-52, Cys-29–Cys-54, Cys-37–Cys-55, Cys-44–Cys-58, Cys-66–Cys-79, and Cys-73–Cys-99. The segment covering 109 to 121 (AKIERDSREHEEP) has biased composition (basic and acidic residues). Residues 109–129 (AKIERDSREHEEPTTSEMAEE) form a disordered region. At Ser-115 the chain carries Phosphoserine. The Thyroglobulin type-1 domain maps to 188–262 (QGPCRRHMEA…MEYVDGDFQC (75 aa)). Disulfide bonds link Cys-191–Cys-218, Cys-229–Cys-240, and Cys-242–Cys-262.

In terms of assembly, interacts with IGF1; this interaction enhances the growth stimulatory effects of IGF1 on fibroblasts. Interacts with CAV1; this interaction allows trafficking of IGFBP5 from the plasma membrane to the nucleus. Interacts with NCL; this interaction is necessary for IGFBP5 localization to the nucleus.

The protein localises to the secreted. The protein resides in the cytoplasm. It is found in the nucleus. In terms of biological role, multifunctional protein that plays a critical role in regulating the availability of IGFs to their receptors and thereby regulates IGF-mediated cellular processes including proliferation, differentiation, and apoptosis in a cell-type specific manner. Increases the cell proliferation of osteoblasts, intestinal smooth muscle cells and neuroblastoma cells. Enhances adhesion and survival of epithelial cells but decreases adhesion of mesenchymal cells. Once secreted, acts as a major mediator of mTORC1-dependent feedback inhibition of IGF1 signaling. Also plays a role in the induction of extracellular matrix (ECM) production and deposition independently of its nuclear translocation and binding to IGFs. Acts itself as a growth factor that can act independently of IGFs to regulate bone formation. Acts as a ligand for the ROR1 receptor which triggers formation of ROR1/HER2 heterodimer to enhance CREB oncogenic signaling. The chain is Insulin-like growth factor-binding protein 5 (IGFBP5) from Sus scrofa (Pig).